A 365-amino-acid chain; its full sequence is MRHDCTDFRQLFLDDVPMMDMRAPVEFAKGAFPGVVNLPLMTDQERQKVGTCYKQQGQAAAITLGHQLVSGTLKRERLHAWASFAKAHPDGYLYCARGGLRSLIVQQWLRDEAGIAYPRIKGGYKALRTFLLDTTQQAVEQCDFVLVGGLTGTGKTDVLHQLNNVIDLEGHANHRGSSFGKRATAQPAQIDFENKLAIDVLKKRARGIEQFVLEDEGRIVGSCTVPLELYQGMQQYPLVWLEDSFENRVERILRDYVINLCAEFVALHGEELGRRLFAERLLQSMSNIHKRLGGERYQRLSEIMRLALDEQQRSGGIDLHRGWIEGLLKEYYDPMYAYQRDAKADRVEFAGDAVEVREYLKARNR.

In terms of domain architecture, Rhodanese spans 12-136 (FLDDVPMMDM…LRTFLLDTTQ (125 aa)). Cys-95 (S-selanylcysteine intermediate) is an active-site residue.

This sequence belongs to the SelU family. Monomer.

The enzyme catalyses 5-methylaminomethyl-2-thiouridine(34) in tRNA + selenophosphate + (2E)-geranyl diphosphate + H2O + H(+) = 5-methylaminomethyl-2-selenouridine(34) in tRNA + (2E)-thiogeraniol + phosphate + diphosphate. The catalysed reaction is 5-methylaminomethyl-2-thiouridine(34) in tRNA + (2E)-geranyl diphosphate = 5-methylaminomethyl-S-(2E)-geranyl-thiouridine(34) in tRNA + diphosphate. It carries out the reaction 5-methylaminomethyl-S-(2E)-geranyl-thiouridine(34) in tRNA + selenophosphate + H(+) = 5-methylaminomethyl-2-(Se-phospho)selenouridine(34) in tRNA + (2E)-thiogeraniol. It catalyses the reaction 5-methylaminomethyl-2-(Se-phospho)selenouridine(34) in tRNA + H2O = 5-methylaminomethyl-2-selenouridine(34) in tRNA + phosphate. Involved in the post-transcriptional modification of the uridine at the wobble position (U34) of tRNA(Lys), tRNA(Glu) and tRNA(Gln). Catalyzes the conversion of 2-thiouridine (S2U-RNA) to 2-selenouridine (Se2U-RNA). Acts in a two-step process involving geranylation of 2-thiouridine (S2U) to S-geranyl-2-thiouridine (geS2U) and subsequent selenation of the latter derivative to 2-selenouridine (Se2U) in the tRNA chain. In Pseudomonas putida (strain W619), this protein is tRNA 2-selenouridine synthase.